Consider the following 252-residue polypeptide: 5'-nucleotidase SurE (252 aa).

Aspartate 8, aspartate 9, serine 39, and asparagine 95 together coordinate a divalent metal cation.

The protein belongs to the SurE nucleotidase family. The cofactor is a divalent metal cation.

Its subcellular location is the cytoplasm. It catalyses the reaction a ribonucleoside 5'-phosphate + H2O = a ribonucleoside + phosphate. In terms of biological role, nucleotidase that shows phosphatase activity on nucleoside 5'-monophosphates. This Clostridium botulinum (strain Okra / Type B1) protein is 5'-nucleotidase SurE.